We begin with the raw amino-acid sequence, 309 residues long: Protein US16 (309 aa).

7 helical membrane-spanning segments follow: residues Gly-50–Phe-70, Val-85–Phe-105, Leu-128–Cys-148, Val-154–Ile-174, Phe-185–Thr-205, Trp-210–Phe-230, and Asp-245–Leu-265.

The protein belongs to the cytomegalovirus US12 family.

It localises to the host membrane. The protein resides in the host cytoplasm. The polypeptide is Protein US16 (US16) (Human cytomegalovirus (strain Merlin) (HHV-5)).